Consider the following 159-residue polypeptide: Large ribosomal subunit protein uL11 (159 aa).

Belongs to the universal ribosomal protein uL11 family. In terms of assembly, part of the ribosomal stalk of the 50S ribosomal subunit. Interacts with L10 and the large rRNA to form the base of the stalk. L10 forms an elongated spine to which L12 dimers bind in a sequential fashion forming a multimeric L10(L12)X complex.

Its function is as follows. Forms part of the ribosomal stalk which helps the ribosome interact with GTP-bound translation factors. This Nitrosopumilus maritimus (strain SCM1) protein is Large ribosomal subunit protein uL11.